Here is a 918-residue protein sequence, read N- to C-terminus: UPF0182 protein CPF_0011 (918 aa).

The next 7 helical transmembrane spans lie at 8–28 (TVLI…NFII), 46–66 (LIAI…VIAI), 91–111 (FLLS…TTQW), 151–171 (AISL…ALGF), 200–220 (LAVL…LKSY), 243–263 (IFYK…FISI), and 271–291 (IIIS…VAIF). Residues 857 to 869 (EENKNSNKDETPK) show a composition bias toward basic and acidic residues. The disordered stretch occupies residues 857 to 876 (EENKNSNKDETPKNEITSDN).

Belongs to the UPF0182 family.

The protein resides in the cell membrane. This chain is UPF0182 protein CPF_0011, found in Clostridium perfringens (strain ATCC 13124 / DSM 756 / JCM 1290 / NCIMB 6125 / NCTC 8237 / Type A).